A 314-amino-acid polypeptide reads, in one-letter code: Olfactory receptor 1E16 (314 aa).

Residues 1–29 are Extracellular-facing; sequence MTERNKTVISQFLLLGLPIPPEHQQLFYA. Asn-5 carries an N-linked (GlcNAc...) asparagine glycan. The chain crosses the membrane as a helical span at residues 30–50; sequence LFLVMYLTTVLGNLIIIILII. Topologically, residues 51–57 are cytoplasmic; sequence LDSHLHT. Residues 58-78 traverse the membrane as a helical segment; sequence PMYLFLSNLSFSDLCFSSVTM. Topologically, residues 79-97 are extracellular; that stretch reads PKLLQNMQSQVPSIPYAGC. Cys-97 and Cys-179 are oxidised to a cystine. The helical transmembrane segment at 98 to 118 threads the bilayer; it reads LAQIYFFLFFGDLGNFLLVAM. The Cytoplasmic portion of the chain corresponds to 119 to 143; the sequence is AYDRYVAICYPLHYTTIMSPRLCVS. Residues 144–164 traverse the membrane as a helical segment; it reads LVVLSWVLTTFHAMLHTLLMA. At 165–196 the chain is on the extracellular side; the sequence is RLSFCEDNVIPHYFCDMSALLKLACSDTRVNE. Residues 197 to 217 form a helical membrane-spanning segment; the sequence is VVIFIVASIFLVLPFALITMS. Topologically, residues 218–239 are cytoplasmic; the sequence is YVRIVSSILKVPSSQGIYKAFS. Residues 240–260 form a helical membrane-spanning segment; sequence TCGSHLSVVSLFYGTVIGLYL. The Extracellular portion of the chain corresponds to 261–271; sequence SPSSNNSTVKD. Residues Asn-265 and Asn-266 are each glycosylated (N-linked (GlcNAc...) asparagine). The helical transmembrane segment at 272–292 threads the bilayer; sequence TVMSLMYTVVTPMLNPFIYSL. The Cytoplasmic portion of the chain corresponds to 293 to 314; sequence RNRDIKGALERVFCKRKIQLNL.

This sequence belongs to the G-protein coupled receptor 1 family. As to expression, olfactory epithelium.

It localises to the cell membrane. Odorant receptor. Activated by a lily-derived aldehyde as well as other odorants. May signal through an inositol 1,4,5-trisphosphate (IP3) second messenger system. The polypeptide is Olfactory receptor 1E16 (Mus musculus (Mouse)).